The primary structure comprises 75 residues: Cytochrome c oxidase subunit 6C (75 aa).

The Mitochondrial matrix portion of the chain corresponds to 1-13; sequence MAPEVLPKPQMRG. Residues 14-54 traverse the membrane as a helical segment; it reads LLARRLRFHMVTGFVLSLGVAALYKVGVADKRKKAYADFYR. Residues 55–75 lie on the Mitochondrial intermembrane side of the membrane; that stretch reads NYDAMKDFEEMRKAGIFQSVK.

It belongs to the cytochrome c oxidase subunit 6c family. Component of the cytochrome c oxidase (complex IV, CIV), a multisubunit enzyme composed of 14 subunits. The complex is composed of a catalytic core of 3 subunits MT-CO1, MT-CO2 and MT-CO3, encoded in the mitochondrial DNA, and 11 supernumerary subunits COX4I, COX5A, COX5B, COX6A, COX6B, COX6C, COX7A, COX7B, COX7C, COX8 and NDUFA4, which are encoded in the nuclear genome. The complex exists as a monomer or a dimer and forms supercomplexes (SCs) in the inner mitochondrial membrane with NADH-ubiquinone oxidoreductase (complex I, CI) and ubiquinol-cytochrome c oxidoreductase (cytochrome b-c1 complex, complex III, CIII), resulting in different assemblies (supercomplex SCI(1)III(2)IV(1) and megacomplex MCI(2)III(2)IV(2)).

Its subcellular location is the mitochondrion inner membrane. Its pathway is energy metabolism; oxidative phosphorylation. Component of the cytochrome c oxidase, the last enzyme in the mitochondrial electron transport chain which drives oxidative phosphorylation. The respiratory chain contains 3 multisubunit complexes succinate dehydrogenase (complex II, CII), ubiquinol-cytochrome c oxidoreductase (cytochrome b-c1 complex, complex III, CIII) and cytochrome c oxidase (complex IV, CIV), that cooperate to transfer electrons derived from NADH and succinate to molecular oxygen, creating an electrochemical gradient over the inner membrane that drives transmembrane transport and the ATP synthase. Cytochrome c oxidase is the component of the respiratory chain that catalyzes the reduction of oxygen to water. Electrons originating from reduced cytochrome c in the intermembrane space (IMS) are transferred via the dinuclear copper A center (CU(A)) of subunit 2 and heme A of subunit 1 to the active site in subunit 1, a binuclear center (BNC) formed by heme A3 and copper B (CU(B)). The BNC reduces molecular oxygen to 2 water molecules using 4 electrons from cytochrome c in the IMS and 4 protons from the mitochondrial matrix. This Macaca silenus (Lion-tailed macaque) protein is Cytochrome c oxidase subunit 6C (COX6C).